Here is a 126-residue protein sequence, read N- to C-terminus: MAFPTTSAQQAETNRKILEEIQTKKQLLAGGIINLGLSPPNQMPAPQLLGQPTTVNPDFQAGVGIATNATSTTRSAFNPTSSTTLGFFIPQDSYFGNSFIPVLPRLEPLPSPATTPTAPPSHSISK.

Residues 106–126 (LEPLPSPATTPTAPPSHSISK) are disordered. Pro residues predominate over residues 107-119 (EPLPSPATTPTAP).

This sequence belongs to the SOSS-C family.

The protein is SOSS complex subunit C homolog of Drosophila sechellia (Fruit fly).